The sequence spans 453 residues: Bifunctional protein GlmU (453 aa).

The segment at 1–227 is pyrophosphorylase; that stretch reads MAVSVIILAA…SIEVMGVNDR (227 aa). UDP-N-acetyl-alpha-D-glucosamine contacts are provided by residues 8–11, K22, Q73, 78–79, 100–102, G137, E152, N167, and N225; these read LAAG, GT, and SGD. D102 contributes to the Mg(2+) binding site. N225 provides a ligand contact to Mg(2+). The linker stretch occupies residues 228–248; it reads QQLAYLERFYQKREAARLMGE. Residues 249 to 453 are N-acetyltransferase; the sequence is GVSLSDPDRF…WPGWKRPSKK (205 aa). Residues R331 and K349 each contribute to the UDP-N-acetyl-alpha-D-glucosamine site. Residue H361 is the Proton acceptor of the active site. 2 residues coordinate UDP-N-acetyl-alpha-D-glucosamine: Y364 and N375. Acetyl-CoA is bound by residues A378, 384 to 385, S403, A421, and R438; that span reads NY. Residues 430 to 453 form a disordered region; the sequence is PPGELTLSRTPQKSWPGWKRPSKK.

It in the N-terminal section; belongs to the N-acetylglucosamine-1-phosphate uridyltransferase family. This sequence in the C-terminal section; belongs to the transferase hexapeptide repeat family. Homotrimer. It depends on Mg(2+) as a cofactor.

The protein localises to the cytoplasm. It carries out the reaction alpha-D-glucosamine 1-phosphate + acetyl-CoA = N-acetyl-alpha-D-glucosamine 1-phosphate + CoA + H(+). The enzyme catalyses N-acetyl-alpha-D-glucosamine 1-phosphate + UTP + H(+) = UDP-N-acetyl-alpha-D-glucosamine + diphosphate. Its pathway is nucleotide-sugar biosynthesis; UDP-N-acetyl-alpha-D-glucosamine biosynthesis; N-acetyl-alpha-D-glucosamine 1-phosphate from alpha-D-glucosamine 6-phosphate (route II): step 2/2. It functions in the pathway nucleotide-sugar biosynthesis; UDP-N-acetyl-alpha-D-glucosamine biosynthesis; UDP-N-acetyl-alpha-D-glucosamine from N-acetyl-alpha-D-glucosamine 1-phosphate: step 1/1. The protein operates within bacterial outer membrane biogenesis; LPS lipid A biosynthesis. Catalyzes the last two sequential reactions in the de novo biosynthetic pathway for UDP-N-acetylglucosamine (UDP-GlcNAc). The C-terminal domain catalyzes the transfer of acetyl group from acetyl coenzyme A to glucosamine-1-phosphate (GlcN-1-P) to produce N-acetylglucosamine-1-phosphate (GlcNAc-1-P), which is converted into UDP-GlcNAc by the transfer of uridine 5-monophosphate (from uridine 5-triphosphate), a reaction catalyzed by the N-terminal domain. The polypeptide is Bifunctional protein GlmU (Nitrosococcus oceani (strain ATCC 19707 / BCRC 17464 / JCM 30415 / NCIMB 11848 / C-107)).